The following is a 227-amino-acid chain: Ribose-5-phosphate isomerase A (227 aa).

Residues 28 to 31 (TGST), 81 to 84 (DGAD), and 94 to 97 (KGGG) contribute to the substrate site. E103 functions as the Proton acceptor in the catalytic mechanism. K121 contributes to the substrate binding site.

It belongs to the ribose 5-phosphate isomerase family. Homodimer.

It catalyses the reaction aldehydo-D-ribose 5-phosphate = D-ribulose 5-phosphate. Its pathway is carbohydrate degradation; pentose phosphate pathway; D-ribose 5-phosphate from D-ribulose 5-phosphate (non-oxidative stage): step 1/1. Catalyzes the reversible conversion of ribose-5-phosphate to ribulose 5-phosphate. This Caulobacter vibrioides (strain ATCC 19089 / CIP 103742 / CB 15) (Caulobacter crescentus) protein is Ribose-5-phosphate isomerase A.